We begin with the raw amino-acid sequence, 290 residues long: Protein MGF 110-9L (290 aa).

The next 3 membrane-spanning stretches (helical) occupy residues 1–19 (MKVI…VIQS), 128–148 (TENI…IGYI), and 163–183 (LLIF…IIMN). N242 and N267 each carry an N-linked (GlcNAc...) asparagine; by host glycan.

Belongs to the asfivirus MGF 110 family.

Its subcellular location is the host membrane. In terms of biological role, plays a role in virus cell tropism, and may be required for efficient virus replication in macrophages. This Ornithodoros (relapsing fever ticks) protein is Protein MGF 110-9L.